A 287-amino-acid polypeptide reads, in one-letter code: uncharacterized protein (287 aa).

Transmembrane regions (helical) follow at residues 7–28 (LLLT…RAAL), 32–54 (AIDA…AVLL), 67–86 (GWRG…YAYV), 91–113 (GTGA…LLRG), 120–139 (ALLG…LPGA), 144–163 (LGGA…YTLL), 170–192 (PLAV…LLAF), 202–224 (GLAY…WYSA), 231–253 (IQGA…LLLG), and 263–280 (ATLA…PRLG). EamA domains follow at residues 15-136 (LAFA…FLLL) and 155-276 (LAWG…LILA).

The protein localises to the cell membrane. This is an uncharacterized protein from Pseudomonas aeruginosa (strain ATCC 15692 / DSM 22644 / CIP 104116 / JCM 14847 / LMG 12228 / 1C / PRS 101 / PAO1).